Reading from the N-terminus, the 400-residue chain is Nicotinate phosphoribosyltransferase (400 aa).

At His220 the chain carries Phosphohistidine; by autocatalysis.

The protein belongs to the NAPRTase family. Post-translationally, transiently phosphorylated on a His residue during the reaction cycle. Phosphorylation strongly increases the affinity for substrates and increases the rate of nicotinate D-ribonucleotide production. Dephosphorylation regenerates the low-affinity form of the enzyme, leading to product release.

The enzyme catalyses nicotinate + 5-phospho-alpha-D-ribose 1-diphosphate + ATP + H2O = nicotinate beta-D-ribonucleotide + ADP + phosphate + diphosphate. The protein operates within cofactor biosynthesis; NAD(+) biosynthesis; nicotinate D-ribonucleotide from nicotinate: step 1/1. Functionally, catalyzes the synthesis of beta-nicotinate D-ribonucleotide from nicotinate and 5-phospho-D-ribose 1-phosphate at the expense of ATP. The chain is Nicotinate phosphoribosyltransferase from Escherichia coli (strain K12 / MC4100 / BW2952).